The following is a 433-amino-acid chain: tRNA(Ile)-lysidine synthase (433 aa).

An ATP-binding site is contributed by 27–32; it reads SGGLDS.

This sequence belongs to the tRNA(Ile)-lysidine synthase family.

The protein localises to the cytoplasm. It carries out the reaction cytidine(34) in tRNA(Ile2) + L-lysine + ATP = lysidine(34) in tRNA(Ile2) + AMP + diphosphate + H(+). In terms of biological role, ligates lysine onto the cytidine present at position 34 of the AUA codon-specific tRNA(Ile) that contains the anticodon CAU, in an ATP-dependent manner. Cytidine is converted to lysidine, thus changing the amino acid specificity of the tRNA from methionine to isoleucine. This is tRNA(Ile)-lysidine synthase from Legionella pneumophila subsp. pneumophila (strain Philadelphia 1 / ATCC 33152 / DSM 7513).